The sequence spans 304 residues: Aspartate carbamoyltransferase catalytic subunit (304 aa).

Residues Arg-53 and Thr-54 each coordinate carbamoyl phosphate. Lys-82 serves as a coordination point for L-aspartate. Residues Arg-103, His-131, and Gln-134 each coordinate carbamoyl phosphate. Arg-163 and Arg-224 together coordinate L-aspartate. 2 residues coordinate carbamoyl phosphate: Leu-263 and Pro-264.

This sequence belongs to the aspartate/ornithine carbamoyltransferase superfamily. ATCase family. In terms of assembly, heterooligomer of catalytic and regulatory chains.

The catalysed reaction is carbamoyl phosphate + L-aspartate = N-carbamoyl-L-aspartate + phosphate + H(+). It participates in pyrimidine metabolism; UMP biosynthesis via de novo pathway; (S)-dihydroorotate from bicarbonate: step 2/3. Its function is as follows. Catalyzes the condensation of carbamoyl phosphate and aspartate to form carbamoyl aspartate and inorganic phosphate, the committed step in the de novo pyrimidine nucleotide biosynthesis pathway. The protein is Aspartate carbamoyltransferase catalytic subunit of Haloquadratum walsbyi (strain DSM 16790 / HBSQ001).